The chain runs to 118 residues: MVRKYETVVIVQPDLGDDELKGLNAKVTDIIATMKGDLHRLEDWGVRKLAYPINKSARGRYYYVRFDGDAALIAELERRLRLDDKVLRYQSVKIEKETAAPAAKVAPVETAPAAEAAE.

Residues 98–118 (TAAPAAKVAPVETAPAAEAAE) form a disordered region. Over residues 99 to 118 (AAPAAKVAPVETAPAAEAAE) the composition is skewed to low complexity.

It belongs to the bacterial ribosomal protein bS6 family.

Its function is as follows. Binds together with bS18 to 16S ribosomal RNA. The protein is Small ribosomal subunit protein bS6 of Geobacter metallireducens (strain ATCC 53774 / DSM 7210 / GS-15).